Reading from the N-terminus, the 181-residue chain is Trafficking protein particle complex subunit 3 homolog (181 aa).

The S-palmitoyl cysteine moiety is linked to residue Cys70.

Belongs to the TRAPP small subunits family. BET3 subfamily. Homodimer. Part of the multisubunit TRAPP (transport protein particle) complex.

It is found in the golgi apparatus. The protein localises to the cis-Golgi network. Its subcellular location is the endoplasmic reticulum. May play a role in vesicular transport from endoplasmic reticulum to Golgi. Required for the systemic spread of the RNAi response. The polypeptide is Trafficking protein particle complex subunit 3 homolog (Caenorhabditis briggsae).